The chain runs to 651 residues: E3 SUMO-protein ligase PIAS1 (651 aa).

The residue at position 2 (alanine 2) is an N-acetylalanine. The required for interaction with MSX1 stretch occupies residues 2–200 (ADSAELKQMV…KCDFTVQVQL (199 aa)). An SAP domain is found at 11–45 (VMSLRVSELQVLLGYAGRNKHGRKHELLTKALHLL). The short motif at 19–23 (LQVLL) is the LXXLL motif element. Glycyl lysine isopeptide (Lys-Gly) (interchain with G-Cter in SUMO2) cross-links involve residues lysine 40 and lysine 46. The Nuclear localization signal signature appears at 56–64 (KIKELYRRR). A PINIT domain is found at 124–288 (HLTSALHPVH…SMAVYLVKQL (165 aa)). Glycyl lysine isopeptide (Lys-Gly) (interchain with G-Cter in SUMO2) cross-links involve residues lysine 137 and lysine 238. The SP-RING-type zinc finger occupies 320 to 405 (PDSEIATTSL…LKYCTDCDEI (86 aa)). Zn(2+) contacts are provided by cysteine 351, histidine 353, cysteine 374, and cysteine 377. Residues 368-380 (KKPTWVCPVCDKK) carry the Nuclear localization signal motif. Lysine 453 participates in a covalent cross-link: Glycyl lysine isopeptide (Lys-Gly) (interchain with G-Cter in SUMO2). The interval 462-473 (LTIDSSSDEEEE) is SUMO1-binding. The disordered stretch occupies residues 465–511 (DSSSDEEEEEPSAKRTCPSLSPTSPLNNKGILSLPHQASPVSRTPSL). Phosphoserine is present on residues serine 467, serine 468, serine 483, and serine 485. A compositionally biased stretch (polar residues) spans 482–491 (PSLSPTSPLN). At threonine 487 the chain carries Phosphothreonine. Serine 488 is modified (phosphoserine). Residue lysine 493 forms a Glycyl lysine isopeptide (Lys-Gly) (interchain with G-Cter in SUMO2) linkage. 3 positions are modified to phosphoserine: serine 503, serine 510, and serine 522. 2 tandem repeats follow at residues 520–523 (NTSL) and 557–560 (NTSL). The segment at 520–615 (NTSLIQDYRH…GSSSGSNSSL (96 aa)) is 4 X 4 AA repeats of N-T-S-L. A 3; approximate repeat occupies 598–601 (STSL). Residues 599–621 (TSLPTTNGSSSGSNSSLVSSNSL) show a composition bias toward low complexity. A disordered region spans residues 599-632 (TSLPTTNGSSSGSNSSLVSSNSLRESHSHTVTNR). Residues 612–615 (NSSL) form a 4; approximate repeat.

Belongs to the PIAS family. As to quaternary structure, interacts with NCOA2 and AR. Interacts with NR2C1; the interaction promotes its sumoylation. Interacts with DDX21, CSRP2, AXIN1, JUN, UBE2I, SUMO1, SATB2, PLAG1, TP53 and STAT1 (dimer), following IFNA1-stimulation. Interacts with SP3 (preferentially when SUMO-modified). Interacts with KLF8; the interaction results in SUMO ligation and repression of KLF8 transcriptional activity and of its cell cycle progression into G(1) phase. Interacts with CHUK/IKKA; this interaction induces PIAS1 phosphorylation. Interacts with PTK2/FAK1; the interaction promotes its sumoylation. Interacts with DDX5. Interacts with PML. Interacts with MTA1. Interacts with SUMO1P1/SUMO5. Interacts with PRDM1/Blimp-1. Interacts (via N-terminus) with MSX1 (via C-terminus); the interaction is required for the localization of both proteins to the nuclear periphery and specific binding of MSX1 to the core enhancer region in target gene promoters. (Microbial infection) Interacts with ebolavirus VP35; this interaction mediates the sumoylation of IRF7 and contributes to the viral inhibition of IFN-type I production. Sumoylated. As to expression, expressed in numerous tissues with highest level in testis.

It localises to the nucleus. Its subcellular location is the nucleus speckle. The protein localises to the PML body. It is found in the cytoplasm. The protein resides in the cytoskeleton. The protein operates within protein modification; protein sumoylation. In terms of biological role, functions as an E3-type small ubiquitin-like modifier (SUMO) ligase, stabilizing the interaction between UBE2I and the substrate, and as a SUMO-tethering factor. Catalyzes sumoylation of various proteins, such as CEBPB, MRE11, MTA1, PTK2 and PML. Plays a crucial role as a transcriptional coregulation in various cellular pathways, including the STAT pathway, the p53 pathway and the steroid hormone signaling pathway. In vitro, binds A/T-rich DNA. The effects of this transcriptional coregulation, transactivation or silencing, may vary depending upon the biological context. Mediates sumoylation of MRE11, stabilizing MRE11 on chromatin during end resection. Sumoylates PML (at 'Lys-65' and 'Lys-160') and PML-RAR and promotes their ubiquitin-mediated degradation. PIAS1-mediated sumoylation of PML promotes its interaction with CSNK2A1/CK2 which in turn promotes PML phosphorylation and degradation. Enhances the sumoylation of MTA1 and may participate in its paralog-selective sumoylation. Plays a dynamic role in adipogenesis by promoting the SUMOylation and degradation of CEBPB. Mediates the nuclear mobility and localization of MSX1 to the nuclear periphery, whereby MSX1 is brought into the proximity of target myoblast differentiation factor genes. Also required for the binding of MSX1 to the core enhancer region in target gene promoter regions, independent of its sumoylation activity. Capable of binding to the core enhancer region TAAT box in the MYOD1 gene promoter. Its function is as follows. (Microbial infection) Restricts Epstein-Barr virus (EBV) lytic replication by acting as an inhibitor for transcription factors involved in lytic gene expression. The virus can use apoptotic caspases to antagonize PIAS1-mediated restriction and express its lytic genes. The chain is E3 SUMO-protein ligase PIAS1 (PIAS1) from Homo sapiens (Human).